A 370-amino-acid polypeptide reads, in one-letter code: Histidinol-phosphate aminotransferase (370 aa).

An N6-(pyridoxal phosphate)lysine modification is found at Lys222.

This sequence belongs to the class-II pyridoxal-phosphate-dependent aminotransferase family. Histidinol-phosphate aminotransferase subfamily. Homodimer. It depends on pyridoxal 5'-phosphate as a cofactor.

It carries out the reaction L-histidinol phosphate + 2-oxoglutarate = 3-(imidazol-4-yl)-2-oxopropyl phosphate + L-glutamate. It participates in amino-acid biosynthesis; L-histidine biosynthesis; L-histidine from 5-phospho-alpha-D-ribose 1-diphosphate: step 7/9. The sequence is that of Histidinol-phosphate aminotransferase from Bacillus cytotoxicus (strain DSM 22905 / CIP 110041 / 391-98 / NVH 391-98).